A 242-amino-acid polypeptide reads, in one-letter code: 3-dehydroquinate dehydratase (242 aa).

3-dehydroquinate-binding positions include 39–41 (EIR) and Arg73. His135 functions as the Proton donor/acceptor in the catalytic mechanism. The Schiff-base intermediate with substrate role is filled by Lys162. Residues Arg203 and Gln228 each contribute to the 3-dehydroquinate site.

Belongs to the type-I 3-dehydroquinase family. In terms of assembly, homodimer.

It carries out the reaction 3-dehydroquinate = 3-dehydroshikimate + H2O. It participates in metabolic intermediate biosynthesis; chorismate biosynthesis; chorismate from D-erythrose 4-phosphate and phosphoenolpyruvate: step 3/7. Its function is as follows. Involved in the third step of the chorismate pathway, which leads to the biosynthesis of aromatic amino acids. Catalyzes the cis-dehydration of 3-dehydroquinate (DHQ) and introduces the first double bond of the aromatic ring to yield 3-dehydroshikimate. The chain is 3-dehydroquinate dehydratase from Methanosarcina mazei (strain ATCC BAA-159 / DSM 3647 / Goe1 / Go1 / JCM 11833 / OCM 88) (Methanosarcina frisia).